A 537-amino-acid chain; its full sequence is MYSNENYAEEGYEDYGYDAGMIDDGYDRSYYPMHEDVKKFLVYFSSVIKNGVVYEIQNLYENTFPKLSEQHFEKKAWPSEEEVAHLVDNDSLFMILYKELYYRHLHARIQKGPSLEQRLNSFYNYCNFFNHILPSKEPVQLELPDIWLWELIDEFVYQFQNFAQYRARLSDKSEEEMDMLLNNNSKVWNILCILNVLHSLVSMSKIKDQLEAAAAGRDPEEVAGEFGRHSFYKMLGYFSLVGLLRVHSLLGDYHQAIKVLEPIEIHKKSQYSHIPACQISTSYYVGFAYMMMRRYSDAIRTFSSILLYIQRTKQLYSARSYQNDQINKQTDQMYHLLAICLVLHPQCIDESIQQVLREKNYHDNMYKMQCGDLETFRNFFVFACPKFVSPVPPPSDAPIDDYVKEALEHQTNVFMDEVRQQQELPTIRSYLKLYTTLPLLKLASFMDHIPQDEIGEQKIENLLTHLLCFKHKMKNIVWTKGASGLEGKFQSGSELDFYIDKDMIHIADTKVSHRYGDFFIRKIMKFEDLNRRLHNLK.

Positions T301–H513 constitute a PCI domain.

Belongs to the eIF-3 subunit L family. Component of the eukaryotic translation initiation factor 3 (eIF-3) complex.

It localises to the cytoplasm. In terms of biological role, component of the eukaryotic translation initiation factor 3 (eIF-3) complex, which is involved in protein synthesis of a specialized repertoire of mRNAs and, together with other initiation factors, stimulates binding of mRNA and methionyl-tRNAi to the 40S ribosome. The eIF-3 complex specifically targets and initiates translation of a subset of mRNAs involved in cell proliferation. In Aedes aegypti (Yellowfever mosquito), this protein is Eukaryotic translation initiation factor 3 subunit L.